The following is an 87-amino-acid chain: Small ribosomal subunit protein bS20 (87 aa).

The tract at residues 1–22 (MAHHKSAIKRIKQNAKKNARNR) is disordered.

This sequence belongs to the bacterial ribosomal protein bS20 family.

Its function is as follows. Binds directly to 16S ribosomal RNA. This Pelobacter propionicus (strain DSM 2379 / NBRC 103807 / OttBd1) protein is Small ribosomal subunit protein bS20.